Consider the following 247-residue polypeptide: Isoprenyl transferase (247 aa).

Residue D18 is part of the active site. Residue D18 participates in Mg(2+) binding. Substrate is bound by residues 19–22, W23, R31, H35, and 63–65; these read GNGR and SSE. N66 (proton acceptor) is an active-site residue. Substrate-binding positions include W67, R69, R186, and 192-194; that span reads RLS. A Mg(2+)-binding site is contributed by E205.

It belongs to the UPP synthase family. Homodimer. Mg(2+) is required as a cofactor.

In terms of biological role, catalyzes the condensation of isopentenyl diphosphate (IPP) with allylic pyrophosphates generating different type of terpenoids. The polypeptide is Isoprenyl transferase (Rhizobium meliloti (strain 1021) (Ensifer meliloti)).